Consider the following 272-residue polypeptide: MTDVSAAASRPAVPPSVIDPDAPAKVAARNLNFYYGQHQALKNINLSIAANRVTAFIGPSGCGKSTLLRVFNRMYDLYPGQRVEGQVLLDNTDILDPRLDLNLLRARVGMVFQKPTPFPMTIYENIAFGIRLYEKLSKSEMDDRVEKALQGGALWNEVKDKLNASGLSLSGGQQQRLCIARTVALRPEVILFDEPCSALDPISTAKIEGLIDELKEHYTIAIVTHNMQQAARVSDTTAFMYLGEMVEFGPTNKVFTSPADRRTQDYITGRFG.

Residues 26 to 267 (VAARNLNFYY…PADRRTQDYI (242 aa)) enclose the ABC transporter domain. Residue 58-65 (GPSGCGKS) participates in ATP binding.

This sequence belongs to the ABC transporter superfamily. Phosphate importer (TC 3.A.1.7) family. As to quaternary structure, the complex is composed of two ATP-binding proteins (PstB), two transmembrane proteins (PstC and PstA) and a solute-binding protein (PstS).

The protein localises to the cell inner membrane. The enzyme catalyses phosphate(out) + ATP + H2O = ADP + 2 phosphate(in) + H(+). In terms of biological role, part of the ABC transporter complex PstSACB involved in phosphate import. Responsible for energy coupling to the transport system. The chain is Phosphate import ATP-binding protein PstB from Nitrobacter hamburgensis (strain DSM 10229 / NCIMB 13809 / X14).